Reading from the N-terminus, the 220-residue chain is MKKEYWLERWRQEEIGFHQREINPYLSRYWPELQVAPGKRVFVPLCGKSRDMIWLREQNLSVLGVELSPLAVEAFFKENGYSPRHIIGEKFDQWDADGIHLLCGDFFDLKKDHLAQVDAVYDRASLVALPPETRHAYTDHLLCILPPAIRILLITFDYPQAEMSGPPFAVSTAEVEALYGKRTDIRLLAKFDVLTENPRFQQRGISRLQESIFLLMTRTA.

The S-adenosyl-L-methionine site is built by W10, L45, E66, and R123.

The protein belongs to the class I-like SAM-binding methyltransferase superfamily. TPMT family.

Its subcellular location is the cytoplasm. It carries out the reaction S-adenosyl-L-methionine + a thiopurine = S-adenosyl-L-homocysteine + a thiopurine S-methylether.. In Nitrosospira multiformis (strain ATCC 25196 / NCIMB 11849 / C 71), this protein is Thiopurine S-methyltransferase.